The following is a 510-amino-acid chain: Histidine ammonia-lyase (510 aa).

The 5-imidazolinone (Ala-Gly) cross-link spans 143–145 (ASG). Ser144 bears the 2,3-didehydroalanine (Ser) mark.

The protein belongs to the PAL/histidase family. Contains an active site 4-methylidene-imidazol-5-one (MIO), which is formed autocatalytically by cyclization and dehydration of residues Ala-Ser-Gly.

Its subcellular location is the cytoplasm. The enzyme catalyses L-histidine = trans-urocanate + NH4(+). It functions in the pathway amino-acid degradation; L-histidine degradation into L-glutamate; N-formimidoyl-L-glutamate from L-histidine: step 1/3. In Aliivibrio fischeri (strain ATCC 700601 / ES114) (Vibrio fischeri), this protein is Histidine ammonia-lyase.